Reading from the N-terminus, the 510-residue chain is MAEADFKMVSEPVAHGVAEEEMASSTSDSGEESDSSSSSSSTSGSSSSSSTSGSSSSSGSGSSSSSSGSGSTSSRSRLYRKKRVPEPSRRARRAPLGTNFVDRLPQAVRNRVQALRNIQDECDKVDTLFLKAIHDLERKYAELNKPLYDRRFQIINAEYEPTEEECEWNSEDEEFSSDEEVQDNTPSEMPPLEGEEEENPKENPEVKAEEKEVPKEIPEVKDEEKEVPKEIPQVKAEEKADSKDCMEATPEVNEDPKEAPQVKADDKEQPKATEAKARAAVREAHKRVPEERLQDSVDLKRARKGKPKREDPKGIPDYWLIVLKNVDKLGPMIQKYDEPILKFLSDVSLKFSKPGQPVSYTFEFHFLPNPYFRNEVLVKTYIIKSKPDHNDPFFSWGWEIEDCEGCKIDWRRGKDVTVTTTQSRTTATGEIEIQPRVVPNASFFNFFSPPEIPMIGKLEPREDAILDEDFEIGQILHDNVILKSVYYYTGEVNGTYYQFGKHYGNKKYRK.

Disordered regions lie at residues 1–99 (MAEA…LGTN) and 161–311 (PTEE…KRED). Low complexity predominate over residues 35–74 (SSSSSSSTSGSSSSSSTSGSSSSSGSGSSSSSSGSGSTSS). Residues 161–182 (PTEEECEWNSEDEEFSSDEEVQ) are compositionally biased toward acidic residues. 3 stretches are compositionally biased toward basic and acidic residues: residues 200–229 (PKENPEVKAEEKEVPKEIPEVKDEEKEVPK), 235–246 (KAEEKADSKDCM), and 254–300 (EDPK…VDLK).

This sequence belongs to the nucleosome assembly protein (NAP) family.

The protein localises to the nucleus. The polypeptide is Nucleosome assembly protein 1-like 3 (NAP1L3) (Pongo abelii (Sumatran orangutan)).